The chain runs to 395 residues: Elongation factor Tu (395 aa).

In terms of domain architecture, tr-type G spans 10 to 205 (KVHMNVGTIG…AMDSYFEDPV (196 aa)). The interval 19 to 26 (GHVDHGKT) is G1. GTP is bound at residue 19–26 (GHVDHGKT). Thr26 contributes to the Mg(2+) binding site. The segment at 60 to 64 (GITIN) is G2. Residues 81–84 (DCPG) form a G3 region. GTP contacts are provided by residues 81–85 (DCPGH) and 136–139 (NKVD). A G4 region spans residues 136–139 (NKVD). Residues 173-175 (SAF) are G5.

This sequence belongs to the TRAFAC class translation factor GTPase superfamily. Classic translation factor GTPase family. EF-Tu/EF-1A subfamily. As to quaternary structure, monomer.

It localises to the cytoplasm. The enzyme catalyses GTP + H2O = GDP + phosphate + H(+). In terms of biological role, GTP hydrolase that promotes the GTP-dependent binding of aminoacyl-tRNA to the A-site of ribosomes during protein biosynthesis. The sequence is that of Elongation factor Tu from Treponema pallidum (strain Nichols).